The following is a 159-amino-acid chain: Ankyrin repeat domain-containing protein 37 (159 aa).

3 ANK repeats span residues Met1–Ala25, Gln30–Gln59, and Leu63–Val92. The Nuclear localization signal motif lies at Glu130–Val150.

Post-translationally, ubiquitinated by the CRL2(FEM1B) complex, leading to its degradation. Expressed testis, ovary, uterus, kidney, liver, but not in other tissues.

The protein localises to the nucleus. The protein resides in the cytoplasm. The chain is Ankyrin repeat domain-containing protein 37 from Mus musculus (Mouse).